Consider the following 395-residue polypeptide: Beta-1,4-galactosyltransferase 3 (395 aa).

Residues 1–10 lie on the Cytoplasmic side of the membrane; sequence MLRRLLERPC. The chain crosses the membrane as a helical; Signal-anchor for type II membrane protein span at residues 11–31; the sequence is TLALLVGSQLAVMMYLSLGGF. Residues 32–395 are Lumenal-facing; it reads RSLSALFGRD…ANHTAPHGSH (364 aa). Residue Asn-57 is glycosylated (N-linked (GlcNAc...) asparagine). Cys-79 and Cys-121 form a disulfide bridge. 132–136 serves as a coordination point for UDP-alpha-D-galactose; that stretch reads PHRAR. N-linked (GlcNAc...) asparagine glycosylation occurs at Asn-168. UDP-alpha-D-galactose contacts are provided by residues 171–173, 198–199, Tyr-228, and Trp-260; these read FNR and VD. Cys-192 and Cys-211 are oxidised to a cystine. Asp-199 is a Mn(2+) binding site. 262 to 265 contacts N-acetyl-D-glucosamine; that stretch reads GEDD. Mn(2+) is bound at residue His-293. UDP-alpha-D-galactose is bound at residue 293–295; the sequence is HRG. Residue Arg-305 coordinates N-acetyl-D-glucosamine. N-linked (GlcNAc...) asparagine glycosylation is found at Asn-339 and Asn-387. The disordered stretch occupies residues 341-395; sequence TADIGTDPRGPRAPSGPRYPPGSSQAFRQEMLQRRPPARPGPLPTANHTAPHGSH.

The protein belongs to the glycosyltransferase 7 family. Requires Mn(2+) as cofactor.

The protein localises to the golgi apparatus. It is found in the golgi stack membrane. The enzyme catalyses an N-acetyl-beta-D-glucosaminyl derivative + UDP-alpha-D-galactose = a beta-D-galactosyl-(1-&gt;4)-N-acetyl-beta-D-glucosaminyl derivative + UDP + H(+). The catalysed reaction is N-acetyl-D-glucosamine + UDP-alpha-D-galactose = beta-D-galactosyl-(1-&gt;4)-N-acetyl-D-glucosamine + UDP + H(+). It catalyses the reaction a beta-D-GlcNAc-(1-&gt;3)-beta-D-Gal-(1-&gt;4)-beta-D-Glc-(1&lt;-&gt;1)-Cer(d18:1(4E)) + UDP-alpha-D-galactose = a neolactoside nLc4Cer(d18:1(4E)) + UDP + H(+). It carries out the reaction a beta-D-glucosylceramide + UDP-alpha-D-galactose = a beta-D-galactosyl-(1-&gt;4)-beta-D-glucosyl-(1&lt;-&gt;1)-ceramide + UDP + H(+). The enzyme catalyses a neolactoside IV(3)-beta-GlcNAc-nLc4Cer + UDP-alpha-D-galactose = a neolactoside nLc6Cer + UDP + H(+). The protein operates within protein modification; protein glycosylation. In terms of biological role, responsible for the synthesis of complex-type N-linked oligosaccharides in many glycoproteins as well as the carbohydrate moieties of glycolipids. This is Beta-1,4-galactosyltransferase 3 from Rattus norvegicus (Rat).